We begin with the raw amino-acid sequence, 185 residues long: Threonylcarbamoyl-AMP synthase (185 aa).

Residues 4-185 (SWRVQQAARE…LATGEIVRPG (182 aa)) form the YrdC-like domain.

This sequence belongs to the SUA5 family. TsaC subfamily.

It is found in the cytoplasm. It carries out the reaction L-threonine + hydrogencarbonate + ATP = L-threonylcarbamoyladenylate + diphosphate + H2O. Functionally, required for the formation of a threonylcarbamoyl group on adenosine at position 37 (t(6)A37) in tRNAs that read codons beginning with adenine. Catalyzes the conversion of L-threonine, HCO(3)(-)/CO(2) and ATP to give threonylcarbamoyl-AMP (TC-AMP) as the acyladenylate intermediate, with the release of diphosphate. This chain is Threonylcarbamoyl-AMP synthase, found in Pseudomonas putida (strain W619).